A 118-amino-acid polypeptide reads, in one-letter code: Crustacean hyperglycemic hormones 2 (118 aa).

A signal peptide spans M1 to A22. 3 cysteine pairs are disulfide-bonded: C51/C87, C67/C83, and C70/C96. At V116 the chain carries Valine amide.

It belongs to the arthropod CHH/MIH/GIH/VIH hormone family.

The protein localises to the secreted. Hormone found in the sinus gland of isopods and decapods which controls the blood sugar level. Has a secretagogue action over the amylase released from the midgut gland. May act as a stress hormone and may be involved in the control of molting and reproduction. The polypeptide is Crustacean hyperglycemic hormones 2 (CHH2) (Penaeus monodon (Giant tiger prawn)).